Here is a 222-residue protein sequence, read N- to C-terminus: Exosome complex component Rrp4 (222 aa).

An S1 motif domain is found at 63-131; the sequence is NDSVIGKVVD…EVKKVKLGLH (69 aa). The region spanning 139-200 is the KH domain; that stretch reads EGGTLAYITP…EIVKRALEMI (62 aa).

The protein belongs to the RRP4 family. As to quaternary structure, component of the archaeal exosome complex. Forms a trimer of Rrp4 and/or Csl4 subunits. The trimer associates with a hexameric ring-like arrangement composed of 3 Rrp41-Rrp42 heterodimers.

Its subcellular location is the cytoplasm. Functionally, non-catalytic component of the exosome, which is a complex involved in RNA degradation. Increases the RNA binding and the efficiency of RNA degradation. Confers strong poly(A) specificity to the exosome. This Methanothermus fervidus (strain ATCC 43054 / DSM 2088 / JCM 10308 / V24 S) protein is Exosome complex component Rrp4.